The following is a 737-amino-acid chain: Transcription activator MSS11 (737 aa).

Positions Met-1–Asn-23 are disordered. The region spanning Ser-51–Leu-83 is the LisH domain. Disordered stretches follow at residues Thr-191–Asn-220, Leu-268–Gln-347, Gly-413–Gly-439, and Lys-572–Ser-660. Positions Asp-207–Asn-220 are enriched in polar residues. The segment covering Gln-269 to Gln-314 has biased composition (low complexity). Composition is skewed to polar residues over residues Ser-330 to Gln-347, Thr-421 to Gly-439, and Lys-572 to Val-585. The span at Asn-590–Thr-643 shows a compositional bias: low complexity. Residues Pro-646–Thr-655 show a composition bias toward basic residues.

It belongs to the MSS11 family. As to quaternary structure, interacts with FLO8, STE12 and TEC1.

Its subcellular location is the cytoplasm. It localises to the nucleus. Its function is as follows. Transcription factor that regulates pseudohyphal differentiation, invasive growth, floculation, adhesion and starch metabolism in response to nutrient availability. This Saccharomyces cerevisiae (strain YJM789) (Baker's yeast) protein is Transcription activator MSS11 (MSS11).